The following is a 162-amino-acid chain: L-amino acid N-acetyltransferase AaaT (162 aa).

The 159-residue stretch at 4–162 (IVIRHAETRD…VDAYYMARVK (159 aa)) folds into the N-acetyltransferase domain.

Belongs to the acetyltransferase family.

It catalyses the reaction L-phenylalanine + acetyl-CoA = N-acetyl-L-phenylalanine + CoA + H(+). The catalysed reaction is L-methionine + acetyl-CoA = N-acetyl-L-methionine + CoA + H(+). In terms of biological role, catalyzes the N-acetylation of L-phenylalanine and L-methionine using acetyl-CoA as acetyl donor in vitro. Cannot accept L-tyrosine as substrate and propionyl-CoA, succinyl-CoA or (S)-methylmalonyl-CoA as acyl donors. Is also able to acetylate and thus detoxify several nonhydrolyzable aminoacyl adenylates, but not the processed form of the peptide-nucleotide antibiotic microcin C (McC). When overproduced, provides complete resistance to leucyl sulfamoyl adenylate (LSA) and partial resistance to alanyl sulfamoyl adenylate (ASA) and phenylalanyl sulfamoyl adenylate (FSA). Therefore, may protect bacteria from various toxic aminoacyl nucleotides, either exogenous or those generated inside the cell during normal metabolism. The protein is L-amino acid N-acetyltransferase AaaT of Escherichia coli (strain K12).